A 692-amino-acid polypeptide reads, in one-letter code: Potassium-transporting ATPase ATP-binding subunit (692 aa).

4 helical membrane passes run 35–55 (VMFI…KDLY), 64–84 (LQIS…EAIA), 213–233 (IALT…VMSL), and 254–274 (ILIS…LSAI). Residue D307 is the 4-aspartylphosphate intermediate of the active site. ATP is bound by residues D344, E348, 377–384 (FSASTKMS), and K400. 2 residues coordinate Mg(2+): D523 and D527. 3 consecutive transmembrane segments (helical) span residues 592–612 (YFAI…VGPL), 626–646 (AVLS…PLAL), and 672–692 (MVIP…LGII).

The protein belongs to the cation transport ATPase (P-type) (TC 3.A.3) family. Type IA subfamily. As to quaternary structure, the system is composed of three essential subunits: KdpA, KdpB and KdpC.

The protein localises to the cell inner membrane. The enzyme catalyses K(+)(out) + ATP + H2O = K(+)(in) + ADP + phosphate + H(+). Functionally, part of the high-affinity ATP-driven potassium transport (or Kdp) system, which catalyzes the hydrolysis of ATP coupled with the electrogenic transport of potassium into the cytoplasm. This subunit is responsible for energy coupling to the transport system and for the release of the potassium ions to the cytoplasm. The chain is Potassium-transporting ATPase ATP-binding subunit from Leptospira interrogans serogroup Icterohaemorrhagiae serovar Lai (strain 56601).